A 91-amino-acid chain; its full sequence is Bacterial microcompartment shell vertex protein PduN (91 aa).

The BMV domain occupies 1–87 (MHLARVTGAV…IDLAVVGIVD (87 aa)).

It belongs to the CcmL/EutN family. As to quaternary structure, homopentamer. Interacts with shell protein PduA.

Its subcellular location is the bacterial microcompartment. It functions in the pathway polyol metabolism; 1,2-propanediol degradation. Its function is as follows. Probably forms vertices in the shell of the bacterial microcompartment (BMC) dedicated to 1,2-propanediol (1,2-PD) degradation. Required for structural integrity of BMCs and to mitigate propionaldehyde toxicity. Functionally, the 1,2-PD-specific bacterial microcompartment (BMC) concentrates low levels of 1,2-PD catabolic enzymes, concentrates volatile reaction intermediates thus enhancing pathway flux and keeps the level of toxic, mutagenic propionaldehyde low. In Salmonella typhimurium (strain LT2 / SGSC1412 / ATCC 700720), this protein is Bacterial microcompartment shell vertex protein PduN.